The sequence spans 298 residues: tRNA pseudouridine synthase B (298 aa).

The Nucleophile role is filled by Asp-39.

This sequence belongs to the pseudouridine synthase TruB family. Type 1 subfamily.

The enzyme catalyses uridine(55) in tRNA = pseudouridine(55) in tRNA. Functionally, responsible for synthesis of pseudouridine from uracil-55 in the psi GC loop of transfer RNAs. This Oenococcus oeni (strain ATCC BAA-331 / PSU-1) protein is tRNA pseudouridine synthase B.